Reading from the N-terminus, the 303-residue chain is Porphobilinogen deaminase (303 aa).

C241 bears the S-(dipyrrolylmethanemethyl)cysteine mark.

Belongs to the HMBS family. Monomer. The cofactor is dipyrromethane.

The enzyme catalyses 4 porphobilinogen + H2O = hydroxymethylbilane + 4 NH4(+). It participates in porphyrin-containing compound metabolism; protoporphyrin-IX biosynthesis; coproporphyrinogen-III from 5-aminolevulinate: step 2/4. It functions in the pathway porphyrin-containing compound metabolism; chlorophyll biosynthesis. Its function is as follows. Tetrapolymerization of the monopyrrole PBG into the hydroxymethylbilane pre-uroporphyrinogen in several discrete steps. The chain is Porphobilinogen deaminase from Roseiflexus castenholzii (strain DSM 13941 / HLO8).